Here is a 354-residue protein sequence, read N- to C-terminus: UDP-N-acetylglucosamine--N-acetylmuramyl-(pentapeptide) pyrophosphoryl-undecaprenol N-acetylglucosamine transferase (354 aa).

UDP-N-acetyl-alpha-D-glucosamine is bound by residues S196 and Q288.

This sequence belongs to the glycosyltransferase 28 family. MurG subfamily.

It localises to the cell membrane. The enzyme catalyses Mur2Ac(oyl-L-Ala-gamma-D-Glu-L-Lys-D-Ala-D-Ala)-di-trans,octa-cis-undecaprenyl diphosphate + UDP-N-acetyl-alpha-D-glucosamine = beta-D-GlcNAc-(1-&gt;4)-Mur2Ac(oyl-L-Ala-gamma-D-Glu-L-Lys-D-Ala-D-Ala)-di-trans,octa-cis-undecaprenyl diphosphate + UDP + H(+). The protein operates within cell wall biogenesis; peptidoglycan biosynthesis. Functionally, cell wall formation. Catalyzes the transfer of a GlcNAc subunit on undecaprenyl-pyrophosphoryl-MurNAc-pentapeptide (lipid intermediate I) to form undecaprenyl-pyrophosphoryl-MurNAc-(pentapeptide)GlcNAc (lipid intermediate II). The sequence is that of UDP-N-acetylglucosamine--N-acetylmuramyl-(pentapeptide) pyrophosphoryl-undecaprenol N-acetylglucosamine transferase from Streptococcus suis (strain 98HAH33).